Consider the following 608-residue polypeptide: Kinetochore protein NUF2 (608 aa).

The segment at 121 to 125 (IGNLR) is required for nuclear localization and function. Coiled-coil stretches lie at residues 176 to 319 (FESQ…QQKL) and 358 to 460 (REKL…IEEE).

It belongs to the NUF2 family.

It is found in the chromosome. It localises to the centromere. Its subcellular location is the kinetochore. Functionally, required for anchoring centrosomal cores to the nuclear periphery. Plays a role in chromosome segregation but is dispensable for centromere clustering. This chain is Kinetochore protein NUF2, found in Toxoplasma gondii (strain ATCC 50611 / Me49).